We begin with the raw amino-acid sequence, 953 residues long: Communesin biosynthesis cluster-specific transcription factor cnsN (953 aa).

The segment at 371–418 (ELESTSPRTSHSSLSQDDTASLHSRSSLSSSPGRFPPSQKLVATSDSP) is disordered. Over residues 374–408 (STSPRTSHSSLSQDDTASLHSRSSLSSSPGRFPPS) the composition is skewed to low complexity.

It localises to the nucleus. Transcriptional regulator; part of the gene cluster that mediates the biosynthesis of communesins, a prominent class of indole alkaloids with great potential as pharmaceuticals. This Penicillium expansum (Blue mold rot fungus) protein is Communesin biosynthesis cluster-specific transcription factor cnsN.